The primary structure comprises 217 residues: Peroxiredoxin Q, chloroplastic (217 aa).

A chloroplast-targeting transit peptide spans 1-65 (MAAICLPVAK…PPPSYSARIS (65 aa)). Residues 70–217 (VSKGSVPPQF…DETLKFLQSA (148 aa)) enclose the Thioredoxin domain. Cys112 serves as the catalytic Cysteine sulfenic acid (-SOH) intermediate. Residues Cys112 and Cys117 are joined by a disulfide bond.

The protein belongs to the peroxiredoxin family. BCP/PrxQ subfamily. In terms of assembly, monomer. Expressed in the leaves, roots and stems.

Its subcellular location is the plastid. The protein localises to the chloroplast thylakoid lumen. It catalyses the reaction a hydroperoxide + [thioredoxin]-dithiol = an alcohol + [thioredoxin]-disulfide + H2O. Thiol-specific peroxidase that catalyzes the reduction of hydrogen peroxide and organic hydroperoxides to water and alcohols, respectively. Plays a role in cell protection against oxidative stress by detoxifying peroxides. Involved in both resistance against fungal disease and oxidative stress. The chain is Peroxiredoxin Q, chloroplastic (AFP1) from Gentiana triflora (Clustered gentian).